We begin with the raw amino-acid sequence, 224 residues long: UPF0758 protein AFE_0358 (224 aa).

The region spanning Gly-102–Trp-224 is the MPN domain. Positions 173, 175, and 186 each coordinate Zn(2+). The JAMM motif motif lies at His-173–Asp-186.

The protein belongs to the UPF0758 family.

The protein is UPF0758 protein AFE_0358 of Acidithiobacillus ferrooxidans (strain ATCC 23270 / DSM 14882 / CIP 104768 / NCIMB 8455) (Ferrobacillus ferrooxidans (strain ATCC 23270)).